The primary structure comprises 51 residues: Large ribosomal subunit protein bL33 (51 aa).

The protein belongs to the bacterial ribosomal protein bL33 family.

This is Large ribosomal subunit protein bL33 from Nitrosospira multiformis (strain ATCC 25196 / NCIMB 11849 / C 71).